The primary structure comprises 1183 residues: Peroxisomal ATPase PEX6 (1183 aa).

Residues 161–205 are disordered; that stretch reads ESRGKKTGEPEDGPLANGIDLNGVDDSDSDEDVLSQGDDDDENNV. Positions 183–204 are enriched in acidic residues; the sequence is GVDDSDSDEDVLSQGDDDDENN. The tract at residues 576–785 is AAA-cassette D1; the sequence is LPNNYISPVH…VERAMTACSE (210 aa). An AAA-cassette D2 region spans residues 878–1070; sequence GILFYGPPGT…CSDAMLKAIT (193 aa). 883–890 is an ATP binding site; that stretch reads GPPGTGKT. The segment at 1160-1183 is disordered; that stretch reads IMVDGPGTGGEGAFGDDGDEEGLY. Acidic residues predominate over residues 1173-1183; that stretch reads FGDDGDEEGLY.

This sequence belongs to the AAA ATPase family. Interacts with PEX1; forming the PEX1-PEX6 AAA ATPase complex, which is composed of a heterohexamer formed by a trimer of PEX1-PEX6 dimers.

Its subcellular location is the cytoplasm. The protein resides in the cytosol. It is found in the peroxisome membrane. The catalysed reaction is ATP + H2O = ADP + phosphate + H(+). In terms of biological role, component of the PEX1-PEX6 AAA ATPase complex, a protein dislocase complex that mediates the ATP-dependent extraction of the PEX5 receptor from peroxisomal membranes, an essential step for PEX5 recycling. Specifically recognizes PEX5 monoubiquitinated at 'Cys-6', and pulls it out of the peroxisome lumen through the PEX2-PEX10-PEX12 retrotranslocation channel. Extraction by the PEX1-PEX6 AAA ATPase complex is accompanied by unfolding of the TPR repeats and release of bound cargo from PEX5. Regulates autophagy and biogenesis of peroxisomes and Woronin bodies. Plays important roles in mycelial growth and development and stress response. Is also essential for conidiation and fatty acid utilization. Required for nematode predation via trap formation. The protein is Peroxisomal ATPase PEX6 of Arthrobotrys oligospora (strain ATCC 24927 / CBS 115.81 / DSM 1491) (Nematode-trapping fungus).